A 460-amino-acid chain; its full sequence is Cysteine--tRNA ligase (460 aa).

Cys-28 provides a ligand contact to Zn(2+). The 'HIGH' region motif lies at 30–40; that stretch reads VTIYDLCHIGH. Zn(2+)-binding residues include Cys-209, His-234, and Glu-238. Positions 266–270 match the 'KMSKS' region motif; sequence KMSKS. Lys-269 lines the ATP pocket.

The protein belongs to the class-I aminoacyl-tRNA synthetase family. In terms of assembly, monomer. Zn(2+) is required as a cofactor.

It is found in the cytoplasm. It carries out the reaction tRNA(Cys) + L-cysteine + ATP = L-cysteinyl-tRNA(Cys) + AMP + diphosphate. This chain is Cysteine--tRNA ligase, found in Vibrio vulnificus (strain CMCP6).